We begin with the raw amino-acid sequence, 337 residues long: Ferredoxin--NADP reductase (337 aa).

Glu42, Gln50, Tyr55, Val97, Phe130, Asp292, and Thr333 together coordinate FAD.

It belongs to the ferredoxin--NADP reductase type 2 family. As to quaternary structure, homodimer. The cofactor is FAD.

The catalysed reaction is 2 reduced [2Fe-2S]-[ferredoxin] + NADP(+) + H(+) = 2 oxidized [2Fe-2S]-[ferredoxin] + NADPH. The polypeptide is Ferredoxin--NADP reductase (Streptococcus mutans serotype c (strain ATCC 700610 / UA159)).